The sequence spans 592 residues: BRCA1-associated protein (592 aa).

Serine 52 bears the Phosphoserine mark. The disordered stretch occupies residues 78–124 (KSNPDELKTTVEERKSSEASPTAQRSKDHSKECINAAPDSPSKQLPD). The span at 80-94 (NPDELKTTVEERKSS) shows a compositional bias: basic and acidic residues. Phosphoserine is present on residues serine 97, serine 117, and serine 119. The RING-type zinc finger occupies 264–304 (CTVCLERMDESVNGILTTLCNHSFHSQCLQRWDDTTCPVCR). The segment at 301 to 393 (PVCRYCQTPE…GKIVQYECEG (93 aa)) adopts a UBP-type; degenerate zinc-finger fold. Zn(2+) is bound by residues cysteine 317, cysteine 320, cysteine 329, cysteine 332, cysteine 337, histidine 344, histidine 348, and histidine 354. The stretch at 429 to 537 (RIEKDTAEEI…EIQEQLRDVM (109 aa)) forms a coiled coil. The segment at 565–592 (AMASASSPASSGGSGKLPSRKGRSKRGK) is disordered. Residues 582–592 (PSRKGRSKRGK) are compositionally biased toward basic residues.

As to quaternary structure, interacts with the nuclear localization signal of BRCA1 and with the N-terminal of KSR1. The C-terminal portion of BCRA1 interacts with DDB1. In terms of tissue distribution, expressed in breast epithelial cell lines.

It localises to the cytoplasm. It catalyses the reaction S-ubiquitinyl-[E2 ubiquitin-conjugating enzyme]-L-cysteine + [acceptor protein]-L-lysine = [E2 ubiquitin-conjugating enzyme]-L-cysteine + N(6)-ubiquitinyl-[acceptor protein]-L-lysine.. It functions in the pathway protein modification; protein ubiquitination. In terms of biological role, negatively regulates MAP kinase activation by limiting the formation of Raf/MEK complexes probably by inactivation of the KSR1 scaffold protein. Also acts as a Ras responsive E3 ubiquitin ligase that, on activation of Ras, is modified by auto-polyubiquitination resulting in the release of inhibition of Raf/MEK complex formation. May also act as a cytoplasmic retention protein with a role in regulating nuclear transport. In Homo sapiens (Human), this protein is BRCA1-associated protein.